The primary structure comprises 195 residues: Imidazoleglycerol-phosphate dehydratase (195 aa).

The protein belongs to the imidazoleglycerol-phosphate dehydratase family.

It localises to the cytoplasm. The catalysed reaction is D-erythro-1-(imidazol-4-yl)glycerol 3-phosphate = 3-(imidazol-4-yl)-2-oxopropyl phosphate + H2O. It functions in the pathway amino-acid biosynthesis; L-histidine biosynthesis; L-histidine from 5-phospho-alpha-D-ribose 1-diphosphate: step 6/9. In Koribacter versatilis (strain Ellin345), this protein is Imidazoleglycerol-phosphate dehydratase.